Consider the following 232-residue polypeptide: Large ribosomal subunit protein uL1 (232 aa).

The protein belongs to the universal ribosomal protein uL1 family. As to quaternary structure, part of the 50S ribosomal subunit.

Its function is as follows. Binds directly to 23S rRNA. The L1 stalk is quite mobile in the ribosome, and is involved in E site tRNA release. Protein L1 is also a translational repressor protein, it controls the translation of the L11 operon by binding to its mRNA. This Parabacteroides distasonis (strain ATCC 8503 / DSM 20701 / CIP 104284 / JCM 5825 / NCTC 11152) protein is Large ribosomal subunit protein uL1.